The primary structure comprises 243 residues: Orotidine 5'-phosphate decarboxylase (243 aa).

Residues D19, K41, 69–78, T124, R185, Q194, G214, and R215 each bind substrate; that span reads DLKFFDIPAT. The Proton donor role is filled by K71.

Belongs to the OMP decarboxylase family. Type 1 subfamily. Homodimer.

The catalysed reaction is orotidine 5'-phosphate + H(+) = UMP + CO2. It functions in the pathway pyrimidine metabolism; UMP biosynthesis via de novo pathway; UMP from orotate: step 2/2. Catalyzes the decarboxylation of orotidine 5'-monophosphate (OMP) to uridine 5'-monophosphate (UMP). The sequence is that of Orotidine 5'-phosphate decarboxylase from Xanthomonas oryzae pv. oryzae (strain MAFF 311018).